A 415-amino-acid polypeptide reads, in one-letter code: MNVLVIGAGGREHALAYKLNQSNLVKQEFVIPGNEAMTPIAEVHTEISESNHQGILDFAKQQNVDWVVIGPEQPLIDGLADILRANGFKVFGPNKQAAQIEGSKLFAKKIMKKYNIPTADYKEVERKKDALTYIENCELPVVVKKDGLAAGKGVIIADTIEAARSAIEIMYGDEEEGTVVFETFLEGEEFSLMTFVNGDLAVPFDCIAQDHKRAFDHDEGPNTGGMGAYCPVPHISDDVLKLTNETIAQPIAKAMLNEGYQFFGVLYIGAILTKDGPKVIEFNARFGDPEAQVLLSRMESDLMQHIIDLDEGKRTEFKWKNESIVGVMLASKGYPDAYEKGHKVSGFDLNENYFVSGLKKQGDTFVTSGGRVILAIGKGDNVQDAQRDAYEKVSQIQSDHLFYRHDIANKALQLK.

The 204-residue stretch at 108–311 folds into the ATP-grasp domain; sequence KKIMKKYNIP…LMQHIIDLDE (204 aa). 134–191 serves as a coordination point for ATP; that stretch reads IENCELPVVVKKDGLAAGKGVIIADTIEAARSAIEIMYGDEEEGTVVFETFLEGEEFS. 2 residues coordinate Mg(2+): E281 and N283.

It belongs to the GARS family. Mg(2+) serves as cofactor. It depends on Mn(2+) as a cofactor.

It catalyses the reaction 5-phospho-beta-D-ribosylamine + glycine + ATP = N(1)-(5-phospho-beta-D-ribosyl)glycinamide + ADP + phosphate + H(+). It functions in the pathway purine metabolism; IMP biosynthesis via de novo pathway; N(1)-(5-phospho-D-ribosyl)glycinamide from 5-phospho-alpha-D-ribose 1-diphosphate: step 2/2. This Staphylococcus aureus (strain Mu50 / ATCC 700699) protein is Phosphoribosylamine--glycine ligase.